A 286-amino-acid polypeptide reads, in one-letter code: MADTYGMNGHNGHVKDRRSSSMNGRNRLYAQQEPQRTTHLSEFGKHMVAASGEFVGTFLFLYFGYAGNIVAVLQEPISGPNGTLANNTVMYIAMAYGFSLLVNVWTFYRISGGLFNPAVTFGLCLSGQLPWIRALFLFPSQIIAAMCAGGLVNAMFPGSASIANTTLGPNTSIAQGVFLEMFFTAQLVFVVLMLAAEKSRDTFLAPVGIGLALFVALIPGVFVTGGSANPVRSFGCAVGSRDFPGYHWIYWVGPLLGAALAAGYFRLVKMMHYEEANPGQDSPVDV.

A disordered region spans residues 1–34; that stretch reads MADTYGMNGHNGHVKDRRSSSMNGRNRLYAQQEP. At 1-52 the chain is on the cytoplasmic side; sequence MADTYGMNGHNGHVKDRRSSSMNGRNRLYAQQEPQRTTHLSEFGKHMVAASG. Residues 53 to 73 traverse the membrane as a helical segment; the sequence is EFVGTFLFLYFGYAGNIVAVL. Over 74–87 the chain is Extracellular; it reads QEPISGPNGTLANN. N-linked (GlcNAc...) asparagine glycans are attached at residues N81 and N86. Residues 88–108 form a helical membrane-spanning segment; the sequence is TVMYIAMAYGFSLLVNVWTFY. The Cytoplasmic segment spans residues 109 to 135; it reads RISGGLFNPAVTFGLCLSGQLPWIRAL. The NPA 1 signature appears at 116-118; the sequence is NPA. Residues 136–156 traverse the membrane as a helical segment; it reads FLFPSQIIAAMCAGGLVNAMF. The Extracellular segment spans residues 157-175; the sequence is PGSASIANTTLGPNTSIAQ. Residues N164 and N170 are each glycosylated (N-linked (GlcNAc...) asparagine). The helical transmembrane segment at 176–196 threads the bilayer; the sequence is GVFLEMFFTAQLVFVVLMLAA. Residues 197–202 lie on the Cytoplasmic side of the membrane; that stretch reads EKSRDT. The helical transmembrane segment at 203–223 threads the bilayer; it reads FLAPVGIGLALFVALIPGVFV. Over 224-244 the chain is Extracellular; that stretch reads TGGSANPVRSFGCAVGSRDFP. Positions 229–231 match the NPA 2 motif; it reads NPV. Residues 245-265 form a helical membrane-spanning segment; sequence GYHWIYWVGPLLGAALAAGYF. Residues 266-286 lie on the Cytoplasmic side of the membrane; it reads RLVKMMHYEEANPGQDSPVDV.

It belongs to the MIP/aquaporin (TC 1.A.8) family.

The protein resides in the membrane. It carries out the reaction H2O(in) = H2O(out). Functionally, probable water channel that may have redundant functions with FgAQP5. This Gibberella zeae (strain ATCC MYA-4620 / CBS 123657 / FGSC 9075 / NRRL 31084 / PH-1) (Wheat head blight fungus) protein is Probable aquaporin-3.